The chain runs to 328 residues: 3-dehydroquinate synthase (328 aa).

Belongs to the archaeal-type DHQ synthase family.

The catalysed reaction is 2-amino-2,3,7-trideoxy-D-lyxo-hept-6-ulosonate + NAD(+) + H2O = 3-dehydroquinate + NH4(+) + NADH + H(+). Its function is as follows. Catalyzes the oxidative deamination and cyclization of 2-amino-3,7-dideoxy-D-threo-hept-6-ulosonic acid (ADH) to yield 3-dehydroquinate (DHQ), which is fed into the canonical shikimic pathway of aromatic amino acid biosynthesis. This chain is 3-dehydroquinate synthase, found in Methanosphaerula palustris (strain ATCC BAA-1556 / DSM 19958 / E1-9c).